The primary structure comprises 2097 residues: MATDDKSSPTLDSANDLPRSPASPSHLTHFKPLTPDQDEPPFKSAYSSFVNLFRFNKERGEGGQGEQQSPSSSWASPQIPSRTQSVRSPVPYKKQLNEELHRRSSVLDSRRKAEPACGGHDPRTAVQLRSLSTVLKRLKEIMEGKSQDSDLKQYWMPDSQCKECYDCSEKFTTFRRRHHCRLCGQIFCSRCCNQEIPGKFMGYTGDLRACTYCRKIALSYAHSTDSNSIGEDLNALSDSTCSVSILDPSEPRTPVGSRKASRNIFLEDDLAWQSLIHPDSSNSALSTRLVSVQEDAGKSPARNRSASITNLSLDRSGSPMVPSYETSVSPQANRNYIRTETTEDERKILLDSAQLKDLWKKICHHTSGMEFQDHRYWLRTHPNCIVGKELVNWLIRNGHIATRAQAIAIGQAMVDGRWLDCVSHHDQLFRDEYALYRPLQSTEFSETPSPDSDSVNSVEGHSEPSWFKDIKFDDSDTEQIAEEGDDNLANSASPSKRTSVSSFQSTVDSDSAASISLNVELDNVNFHIKKPSKYPHVPPHPADQKEYLVSDTGGQQLSISDAFIKESLFNRRVEEKSKELPFTPLGWHHNNLELLREENEEKQAMERLLSANHNHMMALLQQLLQNESLSSSWRDIIVSLVCQVVQTVRPDVKHQDDDMDIRQFVHIKKIPGGKKFDSVVVNGFVCTKNIAHKKMNSCIKNPKILLLKCSIEYLYREETKFTCIDPIVLQEREFLKNYVQRIVDVRPTLVLVEKTVSRIAQDMLLEHGITLVINVKSQVLERISRMTQGDLVVSMDQLLTKPHLGTCHKFYMQIFQLPNEQTKTLMFFEGCPQHLGCTIKLRGGSDYELARVKEILIFMICVAYHSQLEISFLMDEFAMPPTLMQSPSFHLLTEGRGEEGASQEQVSGSSLPQDPECPREALSSEDSTLLESRTVLEKGELDNKSIPQAVASLKHQDYTTPTCPAGIPCALFALVPESLLPLHMDQQDAVGNEQPETSQQTDEQQDPKSQMKAFRDPLQDDTGMYVTEEVTSSEDQRKTYALTFKQELKDVILCISPVITFREPFLLTEKGMRCSTRDYFPEQIYWSPLLNKEVKEMESRRKKQLLRDLSGLQGMNGSVQAKSIQVLPSHELVSTRIAEHLGDSQTLGRMLADYRARGGRIQSKHLDPFVHSKDASCTSGGKSGNKTESDEERGLIPSDVIWPTKVDCLNPANHQRLCVLFSSSSAQSSNAPSACVSPWIVTMEFYGKNDLTLGIFLERYCFRSSYQCPSMFCDTPMVHHIRRFVHGQGCVQIILKELDSPVPGYQHTILTYSWCRICKQVTPVVALSNESWSMSFAKYLELRFYGHQYTRRANAEPCGHSIHHDYHQYFSYNQMVASFSYSPIRLLEVCVPLPKIFIKRQAPLKVSLLQDLKDFFQKVSQVYLAVDERLASLKTDTFSKTREEKMEDIFAQKEMEEGEFKNWTEKMQARLMSSSVDTPQQLQSIFESLIAKKQSLCEVLQAWNSRLQDLFQQEKGRKRPSVPPSPGRLRQGEESKINAMDTSPRNISPGLHNGEKEDRFLTTLSSQSSTSSTHLQLPTPPEALAEQVVGGPTDLDSASGSEDVFDGHLLGSTDSQVKEKSTMKAIFANLLPGNSYNPIPFPFDPDKHYLMYEHERVPIAVCEKEPSSIIAFALSCKEYRNALEELSKATLRNSAEEGLPANSALDNRPKSSSPIRLPEISGGQTNRTVEAEPQPTKKASGMLSFFRGTAGKSPDLSSQKRETLRGADSAYYQVGQAGKEGLESQGLEPQDEVDGGDTQKKQLTNPHVELQFSDANAKFYCRLYYAGEFHKMREVILGSSEEEFIRSLSHSSPWQARGGKSGAAFYATEDDRFILKQMPRLEVQSFLDFAPHYFNYITNAVQQKRPTALAKILGVYRIGYKNSQNNTEKKLDLLVMENLFYGRKMAQVFDLKGSLRNRNVKTDTGKESCDVVLLDENLLKMVRDNPLYIRSHSKSVLRTSIHSDAHFLSSHLIIDYSLLVGRDDTSNELVVGIIDYIRTFTWDKKLEMVVKSTGILGGQGKMPTVVSPELYRTRFCEAMDKYFLMVPDHWTGLDLNC.

The disordered stretch occupies residues 1-44; that stretch reads MATDDKSSPTLDSANDLPRSPASPSHLTHFKPLTPDQDEPPFKS. Ala-2 carries the post-translational modification N-acetylalanine. A phosphoserine; by autocatalysis mark is found at Ser-23 and Ser-48. The segment at 56-122 is disordered; the sequence is NKERGEGGQG…AEPACGGHDP (67 aa). Positions 66–81 are enriched in low complexity; it reads EQQSPSSSWASPQIPS. Phosphoserine is present on Ser-88. The FYVE-type zinc finger occupies 158–218; the sequence is DSQCKECYDC…ACTYCRKIAL (61 aa). Zn(2+) contacts are provided by Cys-164, Cys-167, Cys-180, Cys-183, Cys-188, Cys-191, Cys-210, and Cys-213. Phosphoserine occurs at positions 299, 307, and 312. Ser-318 is subject to Phosphoserine; by PKB/AKT1 or PKB/AKT2. Ser-329 carries the phosphoserine modification. One can recognise a DEP domain in the interval 365 to 440; the sequence is HTSGMEFQDH…DEYALYRPLQ (76 aa). Over residues 442–459 the composition is skewed to polar residues; the sequence is TEFSETPSPDSDSVNSVE. The segment at 442-469 is disordered; it reads TEFSETPSPDSDSVNSVEGHSEPSWFKD. Over residues 460–469 the composition is skewed to basic and acidic residues; it reads GHSEPSWFKD. Position 475 is a phosphoserine (Ser-475). Residues 484–505 form a disordered region; the sequence is GDDNLANSASPSKRTSVSSFQS. Over residues 488–505 the composition is skewed to polar residues; the sequence is LANSASPSKRTSVSSFQS. The segment at 616–868 is chaperonin-like domain; the sequence is MMALLQQLLQ…MICVAYHSQL (253 aa). Disordered regions lie at residues 895-928, 989-1022, 1171-1194, and 1511-1555; these read GRGEEGASQEQVSGSSLPQDPECPREALSSEDST, AVGNEQPETSQQTDEQQDPKSQMKAFRDPLQDDT, HSKDASCTSGGKSGNKTESDEERG, and FQQE…HNGE. Residues 902 to 912 are compositionally biased toward polar residues; it reads SQEQVSGSSLP. Residues 1175 to 1184 show a composition bias toward polar residues; sequence ASCTSGGKSG. The segment covering 1185 to 1194 has biased composition (basic and acidic residues); that stretch reads NKTESDEERG. Phosphoserine is present on residues Ser-1543 and Ser-1548. At Ser-1668 the chain carries Phosphoserine; by autocatalysis. The segment at 1697–1742 is disordered; sequence EGLPANSALDNRPKSSSPIRLPEISGGQTNRTVEAEPQPTKKASGM. The residue at position 1753 (Ser-1753) is a Phosphoserine. In terms of domain architecture, PIPK spans 1757 to 2083; that stretch reads SSQKRETLRG…RFCEAMDKYF (327 aa). Residues 1781-1800 are disordered; that stretch reads GLESQGLEPQDEVDGGDTQK. The tract at residues 1841–2097 is catalytic; sequence EEEFIRSLSH…DHWTGLDLNC (257 aa). A phosphoserine; by autocatalysis mark is found at Ser-1968 and Ser-2052.

As to quaternary structure, component of the PI(3,5)P2 regulatory complex/PAS complex, at least composed of PIKFYVE, FIG4 and VAC14. VAC14 nucleates the assembly of the complex and serves as a scaffold by pentamerizing into a star-shaped structure, which can bind a single copy each of PIKFYVE and FIG4 and coordinates their activities. Interacts (via chaperonin-like domain) with RABEPK; the interaction recruits RABEPK to the endosomal membrane. Interacts with SPAG9. Interacts with EGFR. Mn(2+) is required as a cofactor. Post-translationally, phosphorylated in response to insulin at Ser-318 in a protein kinase B (PKB)-dependent manner. Autophosphorylates which down-regulates lipid product formation. In terms of processing, autophosphorylates which inhibits its own phosphatidylinositol 3-phosphate 5-kinase activity, stimulates FIG4 lipid phosphatase activity and down-regulates lipid product formation. Dephosphorylated by FIG4 in the PI(3,5)P2 regulatory complex, at Ser-48, Ser-1668 and Ser-2052. Phosphorylated in response to insulin at Ser-318 in a protein kinase B (PKB)-dependent manner. As to expression, ubiquitous.

It is found in the endosome membrane. The protein localises to the early endosome membrane. The protein resides in the cytoplasmic vesicle. Its subcellular location is the phagosome membrane. It localises to the late endosome membrane. It carries out the reaction a 1,2-diacyl-sn-glycero-3-phospho-(1D-myo-inositol-3-phosphate) + ATP = a 1,2-diacyl-sn-glycero-3-phospho-(1D-myo-inositol-3,5-bisphosphate) + ADP + H(+). The catalysed reaction is a 1,2-diacyl-sn-glycero-3-phospho-(1D-myo-inositol) + ATP = a 1,2-diacyl-sn-glycero-3-phospho-(1D-myo-inositol-5-phosphate) + ADP + H(+). It catalyses the reaction L-seryl-[protein] + ATP = O-phospho-L-seryl-[protein] + ADP + H(+). With respect to regulation, inhibited by apilimod and YM201636. In terms of biological role, dual specificity kinase implicated in myriad essential cellular processes such as maintenance of endomembrane homeostasis, and endocytic-vacuolar pathway, lysosomal trafficking, nuclear transport, stress- or hormone-induced signaling and cell cycle progression. The PI(3,5)P2 regulatory complex regulates both the synthesis and turnover of phosphatidylinositol 3,5-bisphosphate (PtdIns(3,5)P2). Sole enzyme to catalyze the phosphorylation of phosphatidylinositol 3-phosphate on the fifth hydroxyl of the myo-inositol ring, to form (PtdIns(3,5)P2). Also catalyzes the phosphorylation of phosphatidylinositol on the fifth hydroxyl of the myo-inositol ring, to form phosphatidylinositol 5-phosphate (PtdIns(5)P). Has serine-protein kinase activity and is able to autophosphorylate and transphosphorylate. Autophosphorylation inhibits its own phosphatidylinositol 3-phosphate 5-kinase activity, stimulates FIG4 lipid phosphatase activity and down-regulates lipid product formation. Involved in key endosome operations such as fission and fusion in the course of endosomal cargo transport. Required for the maturation of early into late endosomes, phagosomes and lysosomes. Regulates vacuole maturation and nutrient recovery following engulfment of macromolecules, initiates the redistribution of accumulated lysosomal contents back into the endosome network. Critical regulator of the morphology, degradative activity, and protein turnover of the endolysosomal system in macrophages and platelets. In neutrophils, critical to perform chemotaxis, generate ROS, and undertake phagosome fusion with lysosomes. Plays a key role in the processing and presentation of antigens by major histocompatibility complex class II (MHC class II) mediated by CTSS. Regulates melanosome biogenesis by controlling the delivery of proteins from the endosomal compartment to the melanosome. Essential for systemic glucose homeostasis, mediates insulin-induced signals for endosome/actin remodeling in the course of GLUT4 translocation/glucose uptake activation. Supports microtubule-based endosome-to-trans-Golgi network cargo transport, trhough association with SPAG9 and RABEPK. Mediates EGFR trafficking to the nucleus. The protein is 1-phosphatidylinositol 3-phosphate 5-kinase of Mus musculus (Mouse).